The chain runs to 122 residues: Small ribosomal subunit protein uS8c (122 aa).

This sequence belongs to the universal ribosomal protein uS8 family. In terms of assembly, part of the 30S ribosomal subunit.

It is found in the plastid. It localises to the chloroplast. Functionally, one of the primary rRNA binding proteins, it binds directly to 16S rRNA central domain where it helps coordinate assembly of the platform of the 30S subunit. The protein is Small ribosomal subunit protein uS8c (rps8) of Ostreococcus tauri.